Reading from the N-terminus, the 822-residue chain is Tyrosine-protein kinase Fer (822 aa).

The 259-residue stretch at 1-259 (MGFGSDLKNS…SVEQIDPSTE (259 aa)) folds into the F-BAR domain. Residues 1–300 (MGFGSDLKNS…QANEIMWNNL (300 aa)) form an important for interaction with membranes containing phosphoinositides region. Coiled-coil stretches lie at residues 123-185 (AEMI…HNQY) and 301-390 (TAES…KVQE). A Phosphotyrosine modification is found at Y402. Residue S434 is modified to Phosphoserine. Residues 460–550 (WYHGAIPRIE…KSGVVLLNPI (91 aa)) enclose the SH2 domain. A Protein kinase domain is found at 563-816 (VILGELLGKG…FSELQKELTI (254 aa)). ATP is bound by residues 569–577 (LGKGNFGEV) and K591. Y615 is modified (phosphotyrosine; by autocatalysis). The Proton acceptor role is filled by D684. Y714 is subject to Phosphotyrosine; by autocatalysis.

This sequence belongs to the protein kinase superfamily. Tyr protein kinase family. Fes/fps subfamily. Homotrimer. Interacts with ARHGDIA, IRS1, JAK1, NRP1, PIK3R1, PLEC and TMF1. Interacts with PPP1CA and regulates its phosphorylation at 'Thr-320'. Interacts with CTNND1, EGFR, FLT3, PECAM1, PDGFR and STAT3. Interacts (via SH2 domain) with CTTN. Interacts with HSP90; this stabilizes phosphorylated FER and protects FER against proteasomal degradation. Component of a complex that contains at least FER, CTTN and PTK2/FAK1. Post-translationally, autophosphorylated. In terms of processing, polyubiquitinated; this leads to proteasomal degradation. In terms of tissue distribution, isoform 1 is detected in normal colon and in fibroblasts (at protein level). Isoform 3 is detected in normal testis, in colon carcinoma-derived metastases in lung, liver and ovary, and in colon carcinoma and hepato carcinoma cell lines (at protein level). Isoform 3 is not detected in normal colon or in normal fibroblasts (at protein level). Widely expressed.

The protein resides in the cytoplasm. Its subcellular location is the cytoskeleton. It localises to the cell membrane. It is found in the cell projection. The protein localises to the cell junction. The protein resides in the membrane. Its subcellular location is the nucleus. It localises to the cell cortex. The enzyme catalyses L-tyrosyl-[protein] + ATP = O-phospho-L-tyrosyl-[protein] + ADP + H(+). Activated by phosphatidic acid binding. Activated by hydrogen peroxide (in vitro). Activated by reactive oxygen species (ROS). Functionally, tyrosine-protein kinase that acts downstream of cell surface receptors for growth factors and plays a role in the regulation of the actin cytoskeleton, microtubule assembly, lamellipodia formation, cell adhesion, cell migration and chemotaxis. Acts downstream of EGFR, KIT, PDGFRA and PDGFRB. Acts downstream of EGFR to promote activation of NF-kappa-B and cell proliferation. May play a role in the regulation of the mitotic cell cycle. Plays a role in the insulin receptor signaling pathway and in activation of phosphatidylinositol 3-kinase. Acts downstream of the activated FCER1 receptor and plays a role in FCER1 (high affinity immunoglobulin epsilon receptor)-mediated signaling in mast cells. Plays a role in the regulation of mast cell degranulation. Plays a role in leukocyte recruitment and diapedesis in response to bacterial lipopolysaccharide (LPS). Plays a role in synapse organization, trafficking of synaptic vesicles, the generation of excitatory postsynaptic currents and neuron-neuron synaptic transmission. Plays a role in neuronal cell death after brain damage. Phosphorylates CTTN, CTNND1, PTK2/FAK1, GAB1, PECAM1 and PTPN11. May phosphorylate JUP and PTPN1. Can phosphorylate STAT3, but the biological relevance of this depends on cell type and stimulus. The sequence is that of Tyrosine-protein kinase Fer (FER) from Homo sapiens (Human).